The following is a 695-amino-acid chain: RING finger protein 145 (695 aa).

Helical transmembrane passes span 53-73 (YLALNMHYVGYILSVVLLTLP), 77-97 (LAKLYLYFVAALLLYAGHQIS), 123-143 (FITALVGQLVVCTLCSCVMKT), 146-166 (IWLFSAHMLPLLARLCLVPIE), 168-188 (IVVINKFAMIFTGLEVLYFLA), 225-245 (LVVPVLFMVFWLVLFALQIYT), 275-295 (YSLLGLVFTVSFVALGVLTLC), 316-336 (TEGVTLLILAVQTGLIELQVV), 340-360 (FLLSIILFIVVASILQSMLEI), 384-404 (SLCLFLLVFPSYMAYMICQFF), 410-430 (LLIIISSSILTSLQVLGTLFI), 460-480 (LLEFLVALCVVAYGVSETVFG), and 482-502 (WTVMGSMIIFIHSYYNVWLRA). Residues 537 to 575 (CSICYQDMNSAVITPCSHFFHPGCLKKWLYVQETCPLCH) form an RING-type; atypical zinc finger. Residues 585 to 603 (ATGESGSSTNPVSEQSATN) show a composition bias toward polar residues. A disordered region spans residues 585–610 (ATGESGSSTNPVSEQSATNPPLGPVS).

It localises to the membrane. In Xenopus tropicalis (Western clawed frog), this protein is RING finger protein 145 (rnf145).